The chain runs to 611 residues: MNYRIDFAVLSEHPQFCRFGLTLHNLSDQDLKAWSLHFTIDRYIQPDSISHSQIHQVGSFCSLTPEQDVINSNSHFYCEFSIKTAPFPFHYYTDGIKAAFVQINDVEPRVRHDVIVTPIALASPYRERSEIPATDAATLSLLPKPNHIERLDGEFALTAGSQISLQSSCAETAATWLKQELTHLYQWQPHDIGSADIVLRTNPTLDEGAYLLSVDRKPIRLEASSHIGFVHASATLLQLVRPDGDNLLVPHIVIKDAPRFKYRGMMLDCARHFHPLERVKRLINQLAHYKFNTFHWHLTDDEGWRIEIKSLPQLTDIGAWRGVDEVLEPQYSLLTEKHGGFYTQEEIREVIAYAAERGITVIPEIDIPGHSRAAIKALPEWLFDEDDQSQYRSIQYYNDNVLSPALPGTYRFLDCVLEEVAALFPSHFIHIGADEVPDGVWVNSPKCQALMAEEGYTDAKELQGHLLRYAEKKLKSLGKRMVGWEEAQHGDKVSKDTVIYSWLSEQAALNCARQGFDVILQPGQFTYLDIAQDYAPEEPGVDWAGVTPLERAYRYEPLVEVPEHDPLRKRILGIQCALWCELVNNQDRMDYMIYPRLTALAGSGLDTKIPA.

Belongs to the glycosyl hydrolase 20 family. Homodimer.

It is found in the periplasm. The catalysed reaction is Hydrolysis of terminal non-reducing N-acetyl-D-hexosamine residues in N-acetyl-beta-D-hexosaminides.. Its pathway is glycan degradation; chitin degradation. Its activity is regulated as follows. Inhibited by mercuric ions, PNP-beta-Glc, PNP-beta-Gal, PNP-alpha-GlcNAc, and PNP-beta-S-GlcNAc. Functionally, hydrolyzes aryl-N-acetyl-beta-D-glucosaminide (aryl-beta-GlcNAc), aryl-beta-GalNAc and chitin oligosaccharides. Can hydrolyze rapidly the artificial substrates p-nitrophenyl-N-acetyl-beta-D-glucosaminide (PNP-beta-GlcNAc) and 4-methylumbelliferyl-beta-GlcNAc, and is slightly active on p-nitrophenyl-beta-GalNAc. This enzyme is not processive, i.e. when it hydrolyzes (GlcNAc)n, both products, (Glc-NAc)n-1 and the terminal GlcNAc, are released before the enzyme attacks a second molecule of (GlcNAc)n or (GlcNAc)n-1. The polypeptide is Beta-hexosaminidase (Vibrio furnissii).